Here is a 962-residue protein sequence, read N- to C-terminus: Vacuolar membrane protease (962 aa).

Topologically, residues 1–15 (MVSSRRGFNPIAFTP) are cytoplasmic. A helical membrane pass occupies residues 16 to 36 (WPVTILSSLVYLALIIPIIVV). Residues 37-390 (HHLVPPAPKE…FQLNTLFGHS (354 aa)) lie on the Vacuolar side of the membrane. Residues Asn110 and Asn113 are each glycosylated (N-linked (GlcNAc...) asparagine). Residues His169 and Asp181 each coordinate Zn(2+). The active-site Proton acceptor is Glu215. 3 residues coordinate Zn(2+): Glu216, Glu241, and His314. Residues 391–411 (VALLVVAPLLLIITSVALFAV) form a helical membrane-spanning segment. The Cytoplasmic portion of the chain corresponds to 412 to 440 (DKMYMFSMYTYISESGGQVSLYGLRGMFR). Residues 441 to 461 (FPLILGISTALTIALAFLIMK) traverse the membrane as a helical segment. Topologically, residues 462-472 (VNPFIIYSSPY) are vacuolar. Residues 473–493 (AVWSMMLSTCMFFAWFISCVA) form a helical membrane-spanning segment. Residues 494–503 (DFARPSALHR) are Cytoplasmic-facing. A helical membrane pass occupies residues 504 to 524 (AYSFSWMFGIMWVFLVIATVY). The Vacuolar segment spans residues 525-534 (QKQHGIASSY). Residues 535-555 (FIVFYFAGVAVATWISYLELF) traverse the membrane as a helical segment. The Cytoplasmic portion of the chain corresponds to 556–667 (GLPKTQDYAR…WSIYLMSSAW (112 aa)). The segment at 568-617 (GRLSDRTPSSDSHFLAPSADELPSSSSAAGRDFNPEDVEDEEPTESTSLL) is disordered. Acidic residues predominate over residues 602–611 (PEDVEDEEPT). A helical membrane pass occupies residues 668–688 (ILQFLLVAPIVIILLGQLGLF). Residues 689-704 (LTSATYQIGADGGSQL) lie on the Vacuolar side of the membrane. The chain crosses the membrane as a helical span at residues 705–725 (VIYIGIAVLSVLILLPLFPFI). Over 726–731 (HRFTYH) the chain is Cytoplasmic. A helical membrane pass occupies residues 732–752 (IPTFLLFILIGTLVYNLTAFP). Residues 753-962 (FSHSNRLKLA…LVEGSYSFKL (210 aa)) lie on the Vacuolar side of the membrane. Asn834 is a glycosylation site (N-linked (GlcNAc...) asparagine).

This sequence belongs to the peptidase M28 family. Zn(2+) is required as a cofactor.

It is found in the vacuole membrane. May be involved in vacuolar sorting and osmoregulation. The chain is Vacuolar membrane protease from Arthroderma benhamiae (strain ATCC MYA-4681 / CBS 112371) (Trichophyton mentagrophytes).